Here is a 343-residue protein sequence, read N- to C-terminus: Methionine import ATP-binding protein MetN 1 (343 aa).

Positions 2-241 (IKLSNITKVF…PKTPLAQKFI (240 aa)) constitute an ABC transporter domain. An ATP-binding site is contributed by 38-45 (GASGAGKS).

Belongs to the ABC transporter superfamily. Methionine importer (TC 3.A.1.24) family. As to quaternary structure, the complex is composed of two ATP-binding proteins (MetN), two transmembrane proteins (MetI) and a solute-binding protein (MetQ).

It is found in the cell inner membrane. The enzyme catalyses L-methionine(out) + ATP + H2O = L-methionine(in) + ADP + phosphate + H(+). It catalyses the reaction D-methionine(out) + ATP + H2O = D-methionine(in) + ADP + phosphate + H(+). Part of the ABC transporter complex MetNIQ involved in methionine import. Responsible for energy coupling to the transport system. This is Methionine import ATP-binding protein MetN 1 from Salmonella typhimurium (strain LT2 / SGSC1412 / ATCC 700720).